Consider the following 695-residue polypeptide: Centrosomal protein of 89 kDa (695 aa).

3 disordered regions span residues 24 to 54 (LIPA…RPRS), 66 to 147 (TGRT…GDED), and 167 to 272 (AVPL…SEVL). Pro residues predominate over residues 34-49 (PAVPRTPPPRSPNPSP). 2 stretches are compositionally biased toward acidic residues: residues 124-146 (DEDD…EGDE) and 178-189 (DSDVDEETEDSA). Residues 209–226 (GQTQPSSLPQPRSVSRRS) are compositionally biased toward polar residues. The span at 251–271 (TNKESPVRVNERDRSSEDSEV) shows a compositional bias: basic and acidic residues. Coiled coils occupy residues 276–368 (LEVQ…RYQA) and 406–632 (AYED…LEKE).

The protein localises to the cytoplasm. Its subcellular location is the cytosol. It localises to the cytoskeleton. It is found in the microtubule organizing center. The protein resides in the centrosome. The protein localises to the spindle pole. Its subcellular location is the centriole. It localises to the mitochondrion intermembrane space. In terms of biological role, required for ciliogenesis. Also plays a role in mitochondrial metabolism where it may modulate complex IV activity. The protein is Centrosomal protein of 89 kDa (cep89) of Danio rerio (Zebrafish).